Reading from the N-terminus, the 390-residue chain is Protein shisa-9 (390 aa).

The N-terminal stretch at 1–22 is a signal peptide; sequence MTGIRAIFYYFLVDLLTLLCWA. Over 23 to 134 the chain is Extracellular; it reads QGKGGQHFGS…DPSHDPTRDK (112 aa). Residues Asn40 and Asn74 are each glycosylated (N-linked (GlcNAc...) asparagine). A helical membrane pass occupies residues 135–155; the sequence is TNLIVYIICGVVAVMVLVGIF. Over 156 to 390 the chain is Cytoplasmic; it reads TKLGLEKAHR…VTNSKTEVTV (235 aa).

It belongs to the shisa family. SHISA9 subfamily. As to quaternary structure, component of some AMPA receptors (ionotropic glutamate receptors) complex.

The protein resides in the cell projection. It localises to the dendritic spine membrane. It is found in the synapse. Regulator of short-term neuronal synaptic plasticity in the dentate gyrus. Associates with AMPA receptors (ionotropic glutamate receptors) in synaptic spines and promotes AMPA receptor desensitization at excitatory synapses. The protein is Protein shisa-9 (shisa9) of Xenopus tropicalis (Western clawed frog).